Reading from the N-terminus, the 215-residue chain is Proteasome subunit beta (215 aa).

Positions 1–12 (MLGEIQDKVYKG) are cleaved as a propeptide — removed in mature form; by autocatalysis. Threonine 13 serves as the catalytic Nucleophile.

This sequence belongs to the peptidase T1B family. As to quaternary structure, the 20S proteasome core is composed of 14 alpha and 14 beta subunits that assemble into four stacked heptameric rings, resulting in a barrel-shaped structure. The two inner rings, each composed of seven catalytic beta subunits, are sandwiched by two outer rings, each composed of seven alpha subunits. The catalytic chamber with the active sites is on the inside of the barrel. Has a gated structure, the ends of the cylinder being occluded by the N-termini of the alpha-subunits. Is capped at one or both ends by the proteasome regulatory ATPase, PAN.

It localises to the cytoplasm. The catalysed reaction is Cleavage of peptide bonds with very broad specificity.. The formation of the proteasomal ATPase PAN-20S proteasome complex, via the docking of the C-termini of PAN into the intersubunit pockets in the alpha-rings, triggers opening of the gate for substrate entry. Interconversion between the open-gate and close-gate conformations leads to a dynamic regulation of the 20S proteasome proteolysis activity. In terms of biological role, component of the proteasome core, a large protease complex with broad specificity involved in protein degradation. The sequence is that of Proteasome subunit beta from Archaeoglobus profundus (strain DSM 5631 / JCM 9629 / NBRC 100127 / Av18).